The sequence spans 35 residues: Cytochrome b6-f complex subunit 5 (35 aa).

Residues 5–25 (LLCGIVLGLIPVTLTGLFVAA) form a helical membrane-spanning segment.

This sequence belongs to the PetG family. The 4 large subunits of the cytochrome b6-f complex are cytochrome b6, subunit IV (17 kDa polypeptide, PetD), cytochrome f and the Rieske protein, while the 4 small subunits are PetG, PetL, PetM and PetN. The complex functions as a dimer.

It localises to the plastid. The protein localises to the organellar chromatophore thylakoid membrane. Functionally, component of the cytochrome b6-f complex, which mediates electron transfer between photosystem II (PSII) and photosystem I (PSI), cyclic electron flow around PSI, and state transitions. PetG is required for either the stability or assembly of the cytochrome b6-f complex. The protein is Cytochrome b6-f complex subunit 5 of Paulinella chromatophora.